The sequence spans 388 residues: Probable tRNA sulfurtransferase (388 aa).

In terms of domain architecture, THUMP spans 55 to 162; the sequence is VTLDDKLKKI…PEGVLIFTDR (108 aa). Residues 180 to 181, 205 to 206, arginine 264, glycine 286, and glutamine 295 contribute to the ATP site; these read LL and TF.

The protein belongs to the ThiI family.

It is found in the cytoplasm. The catalysed reaction is [ThiI sulfur-carrier protein]-S-sulfanyl-L-cysteine + a uridine in tRNA + 2 reduced [2Fe-2S]-[ferredoxin] + ATP + H(+) = [ThiI sulfur-carrier protein]-L-cysteine + a 4-thiouridine in tRNA + 2 oxidized [2Fe-2S]-[ferredoxin] + AMP + diphosphate. It catalyses the reaction [ThiS sulfur-carrier protein]-C-terminal Gly-Gly-AMP + S-sulfanyl-L-cysteinyl-[cysteine desulfurase] + AH2 = [ThiS sulfur-carrier protein]-C-terminal-Gly-aminoethanethioate + L-cysteinyl-[cysteine desulfurase] + A + AMP + 2 H(+). It participates in cofactor biosynthesis; thiamine diphosphate biosynthesis. Functionally, catalyzes the ATP-dependent transfer of a sulfur to tRNA to produce 4-thiouridine in position 8 of tRNAs, which functions as a near-UV photosensor. Also catalyzes the transfer of sulfur to the sulfur carrier protein ThiS, forming ThiS-thiocarboxylate. This is a step in the synthesis of thiazole, in the thiamine biosynthesis pathway. The sulfur is donated as persulfide by IscS. The sequence is that of Probable tRNA sulfurtransferase from Thermotoga maritima (strain ATCC 43589 / DSM 3109 / JCM 10099 / NBRC 100826 / MSB8).